The primary structure comprises 138 residues: Beta-lactamase HcpB (138 aa).

3 TPR repeats span residues 1–28, 57–94, and 97–130; these read MVGG…NEMF, GNGC…NDQD, and LILG…GSED. Cystine bridges form between Cys22–Cys30, Cys52–Cys60, Cys88–Cys96, and Cys124–Cys132.

This sequence belongs to the hcp beta-lactamase family.

The enzyme catalyses a beta-lactam + H2O = a substituted beta-amino acid. Hydrolyzes 6-aminopenicillinic acid and 7-aminocephalosporanic acid (ACA) derivatives. This is Beta-lactamase HcpB (hcpB) from Helicobacter pylori (strain ATCC 700392 / 26695) (Campylobacter pylori).